Consider the following 76-residue polypeptide: uncharacterized protein (76 aa).

This is an uncharacterized protein from Saccharomyces cerevisiae (strain ATCC 204508 / S288c) (Baker's yeast).